Reading from the N-terminus, the 254-residue chain is Protein Thf1 (254 aa).

The stretch at 183–217 (SDKLQKDLDLYRSNLEKMEQARITMEEAIQADRRK) forms a coiled coil. Residues 213 to 227 (ADRRKREQREQEKLA) show a composition bias toward basic and acidic residues. Residues 213–254 (ADRRKREQREQEKLAKAAAAEAPAALEASSDNPEPETSETPS) form a disordered region. The segment covering 228 to 240 (KAAAAEAPAALEA) has biased composition (low complexity). A compositionally biased stretch (acidic residues) spans 245–254 (PEPETSETPS).

Belongs to the THF1 family.

Functionally, may be involved in photosynthetic membrane biogenesis. This chain is Protein Thf1, found in Synechococcus elongatus (strain ATCC 33912 / PCC 7942 / FACHB-805) (Anacystis nidulans R2).